A 107-amino-acid chain; its full sequence is Phosphoribosyl-ATP pyrophosphatase (107 aa).

It belongs to the PRA-PH family.

The protein localises to the cytoplasm. The enzyme catalyses 1-(5-phospho-beta-D-ribosyl)-ATP + H2O = 1-(5-phospho-beta-D-ribosyl)-5'-AMP + diphosphate + H(+). It participates in amino-acid biosynthesis; L-histidine biosynthesis; L-histidine from 5-phospho-alpha-D-ribose 1-diphosphate: step 2/9. This Brucella abortus (strain S19) protein is Phosphoribosyl-ATP pyrophosphatase.